Consider the following 535-residue polypeptide: Mannan polymerase I complex VAN1 subunit (535 aa).

Residues Met-1 to Val-64 lie on the Cytoplasmic side of the membrane. Residues Leu-22–Lys-48 are disordered. Position 25 is a phosphoserine (Ser-25). A helical; Signal-anchor for type II membrane protein transmembrane segment spans residues Ser-65–Ile-81. Residues Ser-82 to Glu-535 are Lumenal-facing. 2 N-linked (GlcNAc...) asparagine glycosylation sites follow: Asn-215 and Asn-251.

This sequence belongs to the ANP1/MMN9/VAN1 family. Component of the M-Pol I complex which contains MNN9 and VAN1. Post-translationally, glycosylated.

It is found in the endoplasmic reticulum membrane. The protein localises to the golgi apparatus membrane. In terms of biological role, involved in regulation of the phosphorylation of a number of proteins, some of which appear to be important in cell growth control. Functionally, the M-Pol I complex possesses alpha-1,6-mannosyltransferase activity and is probably involved in the elongation of the mannan backbone of N-linked glycans on cell wall and periplasmic proteins. This is Mannan polymerase I complex VAN1 subunit (VAN1) from Saccharomyces cerevisiae (strain ATCC 204508 / S288c) (Baker's yeast).